Consider the following 726-residue polypeptide: Transferrin (726 aa).

Positions 1 to 16 (MLLCLTLLFSASAVLA) are cleaved as a signal peptide. 2 Transferrin-like domains span residues 29–367 (YKVC…ERDT) and 374–719 (VRFC…VIRA). Cystine bridges form between Cys32-Cys63 and Cys41-Cys54. Fe(3+) is bound by residues Asp78 and Tyr111. Intrachain disulfides connect Cys135/Cys231, Cys184/Cys210, Cys207/Cys216, and Cys274/Cys287. Hydrogencarbonate is bound by residues Thr137, Arg141, Val143, and Gly144. A glycan (N-linked (GlcNAc...) asparagine) is linked at Asn162. A Fe(3+)-binding site is contributed by Tyr225. Asn337 and Asn358 each carry an N-linked (GlcNAc...) asparagine glycan. Intrachain disulfides connect Cys377-Cys414 and Cys387-Cys405. The Fe(3+) site is built by Asp429 and Tyr457. Residues Cys481 and Cys562 are joined by a disulfide bond. Positions 483, 487, 489, and 490 each coordinate hydrogencarbonate. Residues Tyr573 and His642 each contribute to the Fe(3+) site.

The protein belongs to the transferrin family.

The protein localises to the secreted. Functionally, transferrins are iron binding transport proteins which bind Fe(3+) ion in association with the binding of an anion, usually bicarbonate. The protein is Transferrin of Blaberus discoidalis (Tropical cockroach).